Reading from the N-terminus, the 106-residue chain is Large ribosomal subunit protein uL24 (106 aa).

It belongs to the universal ribosomal protein uL24 family. As to quaternary structure, part of the 50S ribosomal subunit.

One of two assembly initiator proteins, it binds directly to the 5'-end of the 23S rRNA, where it nucleates assembly of the 50S subunit. Its function is as follows. One of the proteins that surrounds the polypeptide exit tunnel on the outside of the subunit. The sequence is that of Large ribosomal subunit protein uL24 from Verminephrobacter eiseniae (strain EF01-2).